Reading from the N-terminus, the 218-residue chain is MSPSAGFQFSLYFLQTKKVLWKLTGLCYILLFTLCFFADQENGGKALASPPGIWKRADVTFDSNTAFSSLVVSANKKTVKNVGVPQVVPDNPERFNSSPCVLGSPGFRSGKHYFEVKYGTQREWAVGLAGKSVKRKGNLNLVPEERIWQTGLWWLRHLETDPGRVHSTSGKITVFVDYSGGNVIFDLNRIITILKANFSGEEVVPFFYLGGTVSLTTL.

A signal peptide spans 1 to 40 (MSPSAGFQFSLYFLQTKKVLWKLTGLCYILLFTLCFFADQ). A propeptide spanning residues 41 to 48 (ENGGKALA) is cleaved from the precursor. Residues 49–155 (SPPGIWKRAD…RIWQTGLWWL (107 aa)) enclose the B30.2/SPRY domain. The propeptide occupies 156–218 (RHLETDPGRV…LGGTVSLTTL (63 aa)).

It belongs to the ohanin/vespryn family. Expressed by the venom gland.

The protein resides in the secreted. In terms of biological role, neurotoxin that produces dose-dependent hypolocomotion and hyperalgesia in mice. May directly act on the central nervous system, as it is 6500-fold more potent when administered intracerebroventricularly than intraperitoneal. The polypeptide is Ohanin-like protein (Lachesis muta muta (Bushmaster)).